The chain runs to 319 residues: Acetyl-coenzyme A carboxylase carboxyl transferase subunit alpha (319 aa).

The CoA carboxyltransferase C-terminal domain maps to 35 to 296 (NIDEEVHRLR…KAQLLTDLAD (262 aa)).

This sequence belongs to the AccA family. Acetyl-CoA carboxylase is a heterohexamer composed of biotin carboxyl carrier protein (AccB), biotin carboxylase (AccC) and two subunits each of ACCase subunit alpha (AccA) and ACCase subunit beta (AccD).

It is found in the cytoplasm. The catalysed reaction is N(6)-carboxybiotinyl-L-lysyl-[protein] + acetyl-CoA = N(6)-biotinyl-L-lysyl-[protein] + malonyl-CoA. It participates in lipid metabolism; malonyl-CoA biosynthesis; malonyl-CoA from acetyl-CoA: step 1/1. Functionally, component of the acetyl coenzyme A carboxylase (ACC) complex. First, biotin carboxylase catalyzes the carboxylation of biotin on its carrier protein (BCCP) and then the CO(2) group is transferred by the carboxyltransferase to acetyl-CoA to form malonyl-CoA. The protein is Acetyl-coenzyme A carboxylase carboxyl transferase subunit alpha of Escherichia coli O45:K1 (strain S88 / ExPEC).